A 197-amino-acid chain; its full sequence is Peptidyl-tRNA hydrolase (197 aa).

Residue tyrosine 18 coordinates tRNA. Histidine 23 (proton acceptor) is an active-site residue. Positions 68, 70, and 116 each coordinate tRNA.

It belongs to the PTH family. In terms of assembly, monomer.

It is found in the cytoplasm. The catalysed reaction is an N-acyl-L-alpha-aminoacyl-tRNA + H2O = an N-acyl-L-amino acid + a tRNA + H(+). In terms of biological role, hydrolyzes ribosome-free peptidyl-tRNAs (with 1 or more amino acids incorporated), which drop off the ribosome during protein synthesis, or as a result of ribosome stalling. Its function is as follows. Catalyzes the release of premature peptidyl moieties from peptidyl-tRNA molecules trapped in stalled 50S ribosomal subunits, and thus maintains levels of free tRNAs and 50S ribosomes. This Desulfotalea psychrophila (strain LSv54 / DSM 12343) protein is Peptidyl-tRNA hydrolase.